The sequence spans 461 residues: Nuclear distribution protein PAC1 (461 aa).

Residues 9–41 (QAEELHKSIIAYLTANNLLDTANTLRAELNLNE) form the LisH domain. Residues 61–88 (TSVVRLQKKIMDLESRMSAMQAELDNAT) adopt a coiled-coil conformation. WD repeat units follow at residues 114–155 (SHRD…RTIK), 157–197 (HTRA…KNIR), 201–248 (GHDH…CLRT), 251–290 (GHTAWVRDVFPSPDGRFLLSTGDDSTARLWDISVSNPETK), 312–355 (QYLS…LLTL), 357–396 (GHDNWIRALAFHPGGKYLFSVSDDRTLRCWDLSQEGKCIK), 401–446 (AHER…IRCV), and 448–461 (ATGGVDMKLRIFAN).

It belongs to the WD repeat LIS1/nudF family. As to quaternary structure, self-associates. Interacts with NDL1 and dynein.

Its subcellular location is the cytoplasm. It localises to the cytoskeleton. The protein resides in the spindle pole. Functionally, positively regulates the activity of the minus-end directed microtubule motor protein dynein. May enhance dynein-mediated microtubule sliding by targeting dynein to the microtubule plus end. Required for nuclear migration during vegetative growth as well as development. Required for retrograde early endosome (EE) transport from the hyphal tip. Required for localization of dynein to the mitotic spindle poles. Recruits additional proteins to the dynein complex at SPBs. In Arthroderma benhamiae (strain ATCC MYA-4681 / CBS 112371) (Trichophyton mentagrophytes), this protein is Nuclear distribution protein PAC1.